The sequence spans 352 residues: DNA polymerase IV (352 aa).

In terms of domain architecture, UmuC spans 4–185 (IIHVDMDCFF…LPLSKIPGVG (182 aa)). Asp-8 and Asp-103 together coordinate Mg(2+). The active site involves Glu-104.

This sequence belongs to the DNA polymerase type-Y family. As to quaternary structure, monomer. Requires Mg(2+) as cofactor.

It localises to the cytoplasm. The enzyme catalyses DNA(n) + a 2'-deoxyribonucleoside 5'-triphosphate = DNA(n+1) + diphosphate. Poorly processive, error-prone DNA polymerase involved in untargeted mutagenesis. Copies undamaged DNA at stalled replication forks, which arise in vivo from mismatched or misaligned primer ends. These misaligned primers can be extended by PolIV. Exhibits no 3'-5' exonuclease (proofreading) activity. May be involved in translesional synthesis, in conjunction with the beta clamp from PolIII. The polypeptide is DNA polymerase IV (Yersinia pseudotuberculosis serotype O:1b (strain IP 31758)).